We begin with the raw amino-acid sequence, 421 residues long: MANVKINNISARQILDSRGYPTIEVQITLSNNVFAKASIPSGASVGKFEAVELRDHDTNYYHGYGVTKAVNLINSEIGQKIIKLETLDQEKIDNALIEIDGTNNKSRVGANSILAISLAVAKAAASTLNIPLYQYLGGITAKILPTPLINIINGGMHADNNLDFQEFMIIPHGANSFEDAIRMSSEVFHTLKKILKQKQYNTNVGDEGGFAPNIKDNTEVFDIIIDAIEKSGYKVYKDFSLGLDVAASTFYKNEKYKFSDYQFSTHELVEYYKNIVTQYPIISLEDPIAEEDTLGWKMITKELGDKIQIVGDDLFVTNCKLIKNGIDNNMANAVLIKPNQIGTLTETLNAIRLAQKNNYNVILSHRSGETNDTTISHIAVAVNCGQIKTGSLSRSERLAKYNELLYIEKLLNTSAIYQGML.

Residue Q165 participates in (2R)-2-phosphoglycerate binding. The Proton donor role is filled by E207. Mg(2+) contacts are provided by D244, E285, and D312. 4 residues coordinate (2R)-2-phosphoglycerate: K337, R366, S367, and K388. Residue K337 is the Proton acceptor of the active site.

The protein belongs to the enolase family. Mg(2+) serves as cofactor.

It localises to the cytoplasm. The protein localises to the secreted. The protein resides in the cell surface. The catalysed reaction is (2R)-2-phosphoglycerate = phosphoenolpyruvate + H2O. The protein operates within carbohydrate degradation; glycolysis; pyruvate from D-glyceraldehyde 3-phosphate: step 4/5. Catalyzes the reversible conversion of 2-phosphoglycerate (2-PG) into phosphoenolpyruvate (PEP). It is essential for the degradation of carbohydrates via glycolysis. This Ehrlichia ruminantium (strain Welgevonden) protein is Enolase.